The sequence spans 304 residues: Non-specific ribonucleoside hydrolase RihC (304 aa).

H233 is a catalytic residue.

This sequence belongs to the IUNH family. RihC subfamily.

Functionally, hydrolyzes both purine and pyrimidine ribonucleosides with a broad-substrate specificity. The polypeptide is Non-specific ribonucleoside hydrolase RihC (Escherichia coli O127:H6 (strain E2348/69 / EPEC)).